The sequence spans 355 residues: NADH-quinone oxidoreductase subunit H (355 aa).

A run of 8 helical transmembrane segments spans residues 17–37 (IIMV…IAYI), 86–106 (GVFL…WAVI), 119–139 (VGIL…IMAG), 165–185 (IGFV…SAVV), 204–224 (ILNW…VSAL), 262–282 (YVAI…GWLP), 291–311 (WVPG…LFAM), and 332–352 (FLPL…FAGI).

Belongs to the complex I subunit 1 family. In terms of assembly, NDH-1 is composed of 14 different subunits. Subunits NuoA, H, J, K, L, M, N constitute the membrane sector of the complex.

It is found in the cell inner membrane. The enzyme catalyses a quinone + NADH + 5 H(+)(in) = a quinol + NAD(+) + 4 H(+)(out). In terms of biological role, NDH-1 shuttles electrons from NADH, via FMN and iron-sulfur (Fe-S) centers, to quinones in the respiratory chain. The immediate electron acceptor for the enzyme in this species is believed to be ubiquinone. Couples the redox reaction to proton translocation (for every two electrons transferred, four hydrogen ions are translocated across the cytoplasmic membrane), and thus conserves the redox energy in a proton gradient. This subunit may bind ubiquinone. In Bradyrhizobium diazoefficiens (strain JCM 10833 / BCRC 13528 / IAM 13628 / NBRC 14792 / USDA 110), this protein is NADH-quinone oxidoreductase subunit H.